The chain runs to 77 residues: Large ribosomal subunit protein bL28 (77 aa).

The protein belongs to the bacterial ribosomal protein bL28 family.

This is Large ribosomal subunit protein bL28 from Polynucleobacter asymbioticus (strain DSM 18221 / CIP 109841 / QLW-P1DMWA-1) (Polynucleobacter necessarius subsp. asymbioticus).